Reading from the N-terminus, the 1455-residue chain is Membrane-associated guanylate kinase, WW and PDZ domain-containing protein 2 (1455 aa).

In terms of domain architecture, PDZ 1 spans 17 to 101; it reads ESVIGRNPEG…PLRLKCVKQG (85 aa). The Guanylate kinase-like domain maps to 109-283; that stretch reads RHYLNLRFQK…APVYSQPEEL (175 aa). The disordered stretch occupies residues 205–306; sequence PGATPSAEGK…DNEEPDPLPD (102 aa). Residues 241–252 are compositionally biased toward low complexity; it reads VVNGNGVVVTPE. Over residues 281-296 the composition is skewed to basic and acidic residues; that stretch reads EELKEQMDDTKPTKPE. WW domains lie at 302–335 and 348–381; these read DPLPDNWEMAYTEKGEVYFIDHNTKTTSWLDPRL and NELPYGWEKIDDPIYGTYYVDHINRRTQFENPVL. The tract at residues 302–381 is interaction with DDN; sequence DPLPDNWEMA…RRTQFENPVL (80 aa). Tyrosine 362 bears the Phosphotyrosine mark. PDZ domains lie at 426–510 and 605–683; these read STTL…CRGY and TLTI…HRGG. Phosphoserine is present on serine 686. Residues 778–860 form the PDZ 4 domain; sequence DVHLRRMESG…NGQVNLTVRR (83 aa). Phosphotyrosine is present on tyrosine 827. A disordered region spans residues 869-913; the sequence is CPENGRSPGSVSTHHSSPRSDYATYTNSNHAAPSSNASPPEGFAS. Phosphoserine is present on residues serine 884 and serine 885. The span at 895–908 shows a compositional bias: low complexity; the sequence is NSNHAAPSSNASPP. The region spanning 920–1010 is the PDZ 5 domain; it reads DVVIHRKENE…SVTLRIIPQE (91 aa). Over residues 1011–1040 the composition is skewed to polar residues; it reads ELNSPTSAPSSEKQSPMAQQSPLAQQSPLA. The tract at residues 1011–1136 is disordered; the sequence is ELNSPTSAPS…PDTRQYPLSD (126 aa). Position 1014 is a phosphoserine (serine 1014). Residues 1067–1083 show a composition bias toward basic and acidic residues; it reads NSYRSEVKARQDVKPDI. Positions 1147-1229 constitute a PDZ 6 domain; the sequence is TVDMEKGAKG…RVRLLLKRGT (83 aa). Positions 1231-1455 are disordered; it reads QVPEYDEPAP…LKPGASAASR (225 aa). Low complexity predominate over residues 1238 to 1249; that stretch reads PAPWSSPAAAAP. Residues 1287–1299 are compositionally biased toward basic and acidic residues; it reads DIKREHDVRKPKE. Composition is skewed to low complexity over residues 1346 to 1363, 1399 to 1412, and 1422 to 1433; these read EARAPGLAAADAADAARA, ALEAEGRAGARAGP, and APARKAAVAPGP.

This sequence belongs to the MAGUK family. As to quaternary structure, interacts (via its WW domains) with DRPLA. Interacts (via its second PDZ domain) with PTEN (via unphosphorylated C-terminus); this interaction diminishes the degradation rate of PTEN. Interacts (via guanylate kinase domain) with DLGAP1. Interacts (via the PDZ domains) with GRIN2A, GRID2 and NLGN1. Interacts with CTNND2, CTNNB1, MAGUIN-1, ACVR2A, SMAD2 and SMAD3. Part of a complex consisting of MAGI2/ARIP1, ACVR2A, ACVR1B and SMAD3. May interact with HTR2A. Interacts with IGSF9, RAPGEF2 and HTR4. Identified in a complex with ACTN4, CASK, IQGAP1, NPHS1, SPTAN1 and SPTBN1. Found in a complex, at least composed of KIDINS220, MAGI2, NTRK1 and RAPGEF2; the complex is mainly formed at late endosomes in a NGF-dependent manner. Interacts with RAPGEF2; the interaction occurs before or after nerve growth factor (NGF) stimulation. Interacts (via PDZ domain) with KIDINS220 (via C-terminal domain). Interacts with DDN. Interacts with DLL1. Found in a complex with IGSF9B and NLGN2; the interaction with IGSF9B is mediated via the PDZ 5 and PDZ 6 domains, while the interaction with NLGN2 is mediated via the WW1, WW2 and PDZ2 domains. Interacts (via PDZ 6 domain) with USH1G (via SAM domain); the interaction is triggered by phosphorylation of USH1G by CK2 and negatively regulates MAGI2-mediated endocytosis. In terms of tissue distribution, specifically expressed in brain.

It is found in the cytoplasm. It localises to the late endosome. The protein localises to the synapse. Its subcellular location is the synaptosome. The protein resides in the cell membrane. It is found in the cytoskeleton. It localises to the microtubule organizing center. The protein localises to the centrosome. Its subcellular location is the cell projection. The protein resides in the cilium. It is found in the centriole. It localises to the photoreceptor inner segment. The protein localises to the photoreceptor outer segment. In terms of biological role, seems to act as a scaffold molecule at synaptic junctions by assembling neurotransmitter receptors and cell adhesion proteins. Plays a role in nerve growth factor (NGF)-induced recruitment of RAPGEF2 to late endosomes and neurite outgrowth. May play a role in regulating activin-mediated signaling in neuronal cells. Enhances the ability of PTEN to suppress AKT1 activation. Plays a role in receptor-mediated clathrin-dependent endocytosis which is required for ciliogenesis. The sequence is that of Membrane-associated guanylate kinase, WW and PDZ domain-containing protein 2 (MAGI2) from Homo sapiens (Human).